Here is a 370-residue protein sequence, read N- to C-terminus: Putative agmatine deiminase (370 aa).

Cysteine 361 acts as the Amidino-cysteine intermediate in catalysis.

Belongs to the agmatine deiminase family.

The catalysed reaction is agmatine + H2O = N-carbamoylputrescine + NH4(+). The chain is Putative agmatine deiminase from Shewanella putrefaciens (strain CN-32 / ATCC BAA-453).